The sequence spans 78 residues: Small ribosomal subunit protein bS20 (78 aa).

The protein belongs to the bacterial ribosomal protein bS20 family.

Its function is as follows. Binds directly to 16S ribosomal RNA. This is Small ribosomal subunit protein bS20 from Streptococcus thermophilus (strain ATCC BAA-491 / LMD-9).